We begin with the raw amino-acid sequence, 119 residues long: Large ribosomal subunit protein bL20c (119 aa).

It belongs to the bacterial ribosomal protein bL20 family.

The protein localises to the plastid. It is found in the chloroplast. Functionally, binds directly to 23S ribosomal RNA and is necessary for the in vitro assembly process of the 50S ribosomal subunit. It is not involved in the protein synthesizing functions of that subunit. This chain is Large ribosomal subunit protein bL20c, found in Triticum aestivum (Wheat).